Reading from the N-terminus, the 81-residue chain is MSDPFSEAQHQLDALGLRCPEPVMMVRKSVRKMAQGETLLIIADDPATTRDIPSFCEFMDHKLLASQTDSTPYQYLIQKGL.

Cysteine 19 acts as the Cysteine persulfide intermediate in catalysis.

The protein belongs to the sulfur carrier protein TusA family.

It is found in the cytoplasm. Functionally, sulfur carrier protein which probably makes part of a sulfur-relay system. This Shewanella sediminis (strain HAW-EB3) protein is Sulfur carrier protein TusA.